We begin with the raw amino-acid sequence, 761 residues long: Elongation factor G, mitochondrial (761 aa).

A mitochondrion-targeting transit peptide spans 1-42 (MSVQKMMRVPRKMVGGRIPFFTCSKVFSGFSRRSFHESPLAR). In terms of domain architecture, tr-type G spans 68-349 (NKLRNIGISA…AIVDYLPNPS (282 aa)). Residues 77–84 (AHIDSGKT), 148–152 (DTPGH), and 202–205 (NKMD) each bind GTP.

It belongs to the TRAFAC class translation factor GTPase superfamily. Classic translation factor GTPase family. EF-G/EF-2 subfamily. In terms of processing, the precursor is processed in two steps involving mitochondrial intermediate peptidase (MIP) and mitochondrial processing peptidase (MPP).

Its subcellular location is the mitochondrion. Its pathway is protein biosynthesis; polypeptide chain elongation. Its function is as follows. Mitochondrial GTPase that catalyzes the GTP-dependent ribosomal translocation step during translation elongation. During this step, the ribosome changes from the pre-translocational (PRE) to the post-translocational (POST) state as the newly formed A-site-bound peptidyl-tRNA and P-site-bound deacylated tRNA move to the P and E sites, respectively. Catalyzes the coordinated movement of the two tRNA molecules, the mRNA and conformational changes in the ribosome. This Saccharomyces cerevisiae (strain YJM789) (Baker's yeast) protein is Elongation factor G, mitochondrial.